Consider the following 448-residue polypeptide: uncharacterized protein (448 aa).

Residue 257-264 coordinates ATP; it reads GRNAQGKT.

This is an uncharacterized protein from Methanocaldococcus jannaschii (strain ATCC 43067 / DSM 2661 / JAL-1 / JCM 10045 / NBRC 100440) (Methanococcus jannaschii).